A 493-amino-acid chain; its full sequence is Alpha-amylase-related protein (493 aa).

Residues 1–19 form the signal peptide; sequence MFKFALTQTLCLAGSLSLA. Gln-20 is subject to Pyrrolidone carboxylic acid. Cys-47 and Cys-103 are joined by a disulfide. Positions 117, 168, and 177 each coordinate Ca(2+). A disulfide bridge connects residues Cys-156 and Cys-170. Arg-205 contacts chloride. Asp-207 functions as the Nucleophile in the catalytic mechanism. Residue His-211 participates in Ca(2+) binding. The Proton donor role is filled by Glu-244. Chloride contacts are provided by Asn-307 and Arg-342. Intrachain disulfides connect Cys-375–Cys-381, Cys-417–Cys-440, and Cys-447–Cys-459.

The protein belongs to the glycosyl hydrolase 13 family. Monomer. The cofactor is Ca(2+). Chloride is required as a cofactor.

Its subcellular location is the secreted. It catalyses the reaction Endohydrolysis of (1-&gt;4)-alpha-D-glucosidic linkages in polysaccharides containing three or more (1-&gt;4)-alpha-linked D-glucose units.. The chain is Alpha-amylase-related protein (Amyrel) from Drosophila mauritiana (Fruit fly).